The sequence spans 223 residues: MNILIFGPNGSGKGTQGALAKKKYDLDHIESGAIFRKHIGGGTELGMKAKEYIDKGELVPDDITIPMVLDVLQSSGENGWLLDGFPRSIVQAEKLWEALEKDGVKLDFVIEILLPREVAKNRIMGRRLCENDPNHPNNKFIDAIKPDGDKCRVCGGALSERADDQDEDAINKRHDIYYDDNTGTVAAAYFYKDLAPKAGFKYIELNGEGTIEEIKDTLMGQLV.

An ATP-binding site is contributed by 10-15 (GSGKGT). An NMP region spans residues 30–59 (ESGAIFRKHIGGGTELGMKAKEYIDKGELV). AMP is bound by residues S31, R36, 57–59 (ELV), 84–87 (GFPR), and Q91. Residues 125 to 164 (GRRLCENDPNHPNNKFIDAIKPDGDKCRVCGGALSERADD) are LID. ATP is bound at residue R126. Residues R161 and R173 each contribute to the AMP site. Position 209 (G209) interacts with ATP.

The protein belongs to the adenylate kinase family. In terms of assembly, monomer.

Its subcellular location is the cytoplasm. The enzyme catalyses AMP + ATP = 2 ADP. It participates in purine metabolism; AMP biosynthesis via salvage pathway; AMP from ADP: step 1/1. Its function is as follows. Catalyzes the reversible transfer of the terminal phosphate group between ATP and AMP. Plays an important role in cellular energy homeostasis and in adenine nucleotide metabolism. The protein is Adenylate kinase of Maridesulfovibrio salexigens (strain ATCC 14822 / DSM 2638 / NCIMB 8403 / VKM B-1763) (Desulfovibrio salexigens).